A 90-amino-acid chain; its full sequence is Small ribosomal subunit protein uS15c (90 aa).

Belongs to the universal ribosomal protein uS15 family. Part of the 30S ribosomal subunit.

It localises to the plastid. Its subcellular location is the chloroplast. In Citrus sinensis (Sweet orange), this protein is Small ribosomal subunit protein uS15c (rps15).